A 90-amino-acid polypeptide reads, in one-letter code: Cell division topological specificity factor (90 aa).

Belongs to the MinE family.

In terms of biological role, prevents the cell division inhibition by proteins MinC and MinD at internal division sites while permitting inhibition at polar sites. This ensures cell division at the proper site by restricting the formation of a division septum at the midpoint of the long axis of the cell. In Clostridium perfringens (strain ATCC 13124 / DSM 756 / JCM 1290 / NCIMB 6125 / NCTC 8237 / Type A), this protein is Cell division topological specificity factor.